A 263-amino-acid polypeptide reads, in one-letter code: Glucosamine-6-phosphate deaminase (263 aa).

The active-site Proton acceptor; for enolization step is aspartate 72. Residue aspartate 141 is the For ring-opening step of the active site. Histidine 143 (proton acceptor; for ring-opening step) is an active-site residue. Glutamate 148 (for ring-opening step) is an active-site residue.

Belongs to the glucosamine/galactosamine-6-phosphate isomerase family. NagB subfamily.

It carries out the reaction alpha-D-glucosamine 6-phosphate + H2O = beta-D-fructose 6-phosphate + NH4(+). It participates in amino-sugar metabolism; N-acetylneuraminate degradation; D-fructose 6-phosphate from N-acetylneuraminate: step 5/5. Allosterically activated by N-acetylglucosamine 6-phosphate (GlcNAc6P). Catalyzes the reversible isomerization-deamination of glucosamine 6-phosphate (GlcN6P) to form fructose 6-phosphate (Fru6P) and ammonium ion. This Porphyromonas gingivalis (strain ATCC BAA-308 / W83) protein is Glucosamine-6-phosphate deaminase.